Reading from the N-terminus, the 448-residue chain is Fibulin-5 (448 aa).

Positions 1–23 are cleaved as a signal peptide; the sequence is MPGLKRILTVTILALWLPHPGNA. Residues 42–82 form the EGF-like 1; calcium-binding domain; it reads DIDECRTIPEACRGDMMCVNQNGGYLCIPRTNPVYRGPYSN. 17 disulfide bridges follow: C46–C59, C53–C68, C131–C144, C138–C153, C155–C166, C172–C181, C177–C190, C192–C205, C211–C221, C217–C230, C232–C245, C251–C262, C258–C271, C273–C286, C292–C305, C299–C314, and C320–C332. Positions 54 to 56 match the Cell attachment site motif; sequence RGD. The EGF-like 2; calcium-binding domain maps to 127-167; the sequence is DVDECATDSHQCNPTQICINTEGGYTCSCTDGYWLLEGQCL. Residues 168-206 form the EGF-like 3; calcium-binding domain; sequence DIDECRYGYCQQLCANVPGSYSCTCNPGFTLNDDGRSCQ. The 40-residue stretch at 207-246 folds into the EGF-like 4; calcium-binding domain; it reads DVNECETENPCVQTCVNTYGSFICRCDPGYELEEDGIHCS. An interaction with LOXL1 region spans residues 245 to 448; that stretch reads CSDMDECSFS…LRIYVSQYPF (204 aa). One can recognise an EGF-like 5; calcium-binding domain in the interval 247-287; the sequence is DMDECSFSEFLCQHECVNQPGSYFCSCPPGYVLLDDNRSCQ. N-linked (GlcNAc...) asparagine glycans are attached at residues N283 and N296. The region spanning 288-333 is the EGF-like 6; calcium-binding domain; that stretch reads DINECEHRNHTCTSLQTCYNLQGGFKCIDPISCEEPYLLIGENRCM.

Belongs to the fibulin family. Homodimer. Monomer, homodimerizes in presence of Ca(2+). Interacts with ELN. Interacts (via N-terminus) with the integrins ITGAV/ITGB3, ITGAV/ITGB5 and ITGA9/ITGB1. Interacts with FBN1 (via N-terminal domain). Forms a ternary complex with ELN and FBN1. Interacts with EFEMP2 with moderate affinity. Interacts with LOXL1. In terms of processing, N-glycosylated.

The protein resides in the secreted. Its subcellular location is the extracellular space. It is found in the extracellular matrix. Functionally, essential for elastic fiber formation, is involved in the assembly of continuous elastin (ELN) polymer and promotes the interaction of microfibrils and ELN. Stabilizes and organizes elastic fibers in the skin, lung and vasculature. Promotes adhesion of endothelial cells through interaction of integrins and the RGD motif. Vascular ligand for integrin receptors which may play a role in vascular development and remodeling. May act as an adapter that mediates the interaction between FBN1 and ELN. This is Fibulin-5 (Fbln5) from Mus musculus (Mouse).